Here is a 121-residue protein sequence, read N- to C-terminus: Neuromedin-B (121 aa).

Residues 1–24 (MTRQAGSSWLLRGLLLFALFASGV) form the signal peptide. Methionine 56 bears the Methionine amide mark. A propeptide spanning residues 60-121 (SLEPPSLSLV…RRLLEPLLQK (62 aa)) is cleaved from the precursor.

It belongs to the bombesin/neuromedin-B/ranatensin family. As to expression, in the hindbrain, expressed in the medulla surrounding the lateral half of the facial nucleus. Also expressed in the olfactory bulb and hippocampus. Detected in a subset of neurons distributed throughout the retrotrapezoid nucleus/parafacial respiratory group (RTN/pFRG). Within the RTN/pFRG, expressed in neuronal subpopulations distinct from those expressing Grp. Expressed in lung.

The protein resides in the secreted. It localises to the cell projection. The protein localises to the neuron projection. In terms of biological role, stimulates smooth muscle contraction. Induces sighing by acting directly on the pre-Botzinger complex, a cluster of several thousand neurons in the ventrolateral medulla responsible for inspiration during respiratory activity. Contributes to the induction of sneezing following exposure to chemical irritants or allergens which causes release of NMB by nasal sensory neurons and activation of NMBR-expressing neurons in the sneeze-evoking region of the brainstem. These in turn activate neurons of the caudal ventral respiratory group, giving rise to the sneeze reflex. Contributes to induction of acute itch, possibly through activation of the NMBR receptor on dorsal root ganglion neurons. Increases expression of NMBR and steroidogenic mediators STAR, CYP11A1 and HSD3B1 in Leydig cells, induces secretion of testosterone by Leydig cells and also promotes Leydig cell proliferation. Plays a role in the innate immune response to influenza A virus infection by enhancing interferon alpha expression and reducing expression of IL6. Plays a role in CSF1-induced proliferation of osteoclast precursors by contributing to the positive regulation of the expression of the CSF1 receptor CSF1R. The protein is Neuromedin-B (Nmb) of Mus musculus (Mouse).